Consider the following 260-residue polypeptide: Archaerhodopsin-1 (260 aa).

Residues 1–6 (MDPIAL) constitute a propeptide that is removed on maturation. Residues 7 to 20 (TAAVGADLLGDGRP) lie on the Extracellular side of the membrane. Residues 21–42 (ETLWLGIGTLLMLIGTFYFIVK) form a helical membrane-spanning segment. Topologically, residues 43–51 (GWGVTDKEA) are cytoplasmic. A helical transmembrane segment spans residues 52–73 (REYYSITILVPGIASAAYLSMF). Over 74 to 91 (FGIGLTEVQVGSEMLDIY) the chain is Extracellular. The helical transmembrane segment at 92–113 (YARYADWLFTTPLLLLDLALLA) threads the bilayer. Residues 114–116 (KVD) are Cytoplasmic-facing. The helical transmembrane segment at 117–139 (RVSIGTLVGVDALMIVTGLVGAL) threads the bilayer. Residues 140–143 (SHTP) are Extracellular-facing. A helical transmembrane segment spans residues 144–172 (LARYTWWLFSTICMIVVLYFLATSLRAAA). Over 173-176 (KERG) the chain is Cytoplasmic. The chain crosses the membrane as a helical span at residues 177–204 (PEVASTFNTLTALVLVLWTAYPILWIIG). The Extracellular portion of the chain corresponds to 205–212 (TEGAGVVG). A helical membrane pass occupies residues 213–245 (LGIETLLFMVLDVTAKVGFGFILLRSRAILGDT). At Lys-228 the chain carries N6-(retinylidene)lysine. Residues 246–260 (EAPEPSAGAEASAAD) lie on the Cytoplasmic side of the membrane.

The protein belongs to the archaeal/bacterial/fungal opsin family.

The protein resides in the cell membrane. Light-driven proton pump. It may interact with bacterioruberin in the claret membrane. The sequence is that of Archaerhodopsin-1 from Halorubrum ezzemoulense (Halorubrum chaoviator).